We begin with the raw amino-acid sequence, 221 residues long: Protein GrpE (221 aa).

The disordered stretch occupies residues 1–83 (MEQEQKATQE…AKNCRTRSED (83 aa)). The segment covering 23–32 (QEEKAEERGG) has biased composition (basic and acidic residues). A compositionally biased stretch (low complexity) spans 41 to 53 (ENLQQENTQAQQE).

Belongs to the GrpE family. In terms of assembly, homodimer.

The protein localises to the cytoplasm. Its function is as follows. Participates actively in the response to hyperosmotic and heat shock by preventing the aggregation of stress-denatured proteins, in association with DnaK and GrpE. It is the nucleotide exchange factor for DnaK and may function as a thermosensor. Unfolded proteins bind initially to DnaJ; upon interaction with the DnaJ-bound protein, DnaK hydrolyzes its bound ATP, resulting in the formation of a stable complex. GrpE releases ADP from DnaK; ATP binding to DnaK triggers the release of the substrate protein, thus completing the reaction cycle. Several rounds of ATP-dependent interactions between DnaJ, DnaK and GrpE are required for fully efficient folding. The polypeptide is Protein GrpE (Geobacillus stearothermophilus (Bacillus stearothermophilus)).